The chain runs to 285 residues: Elongation factor Ts (285 aa).

The segment at Thr-82–Val-85 is involved in Mg(2+) ion dislocation from EF-Tu.

Belongs to the EF-Ts family.

Its subcellular location is the cytoplasm. In terms of biological role, associates with the EF-Tu.GDP complex and induces the exchange of GDP to GTP. It remains bound to the aminoacyl-tRNA.EF-Tu.GTP complex up to the GTP hydrolysis stage on the ribosome. This is Elongation factor Ts from Yersinia pseudotuberculosis serotype O:1b (strain IP 31758).